A 264-amino-acid polypeptide reads, in one-letter code: uncharacterized protein (264 aa).

H5, H7, E93, H134, H158, and D208 together coordinate a divalent metal cation.

This sequence belongs to the metallo-dependent hydrolases superfamily. TatD-type hydrolase family. A divalent metal cation is required as a cofactor.

This is an uncharacterized protein from Mycobacterium tuberculosis (strain ATCC 25618 / H37Rv).